A 137-amino-acid polypeptide reads, in one-letter code: Peptide methionine sulfoxide reductase MsrB (137 aa).

A MsrB domain is found at 7-129; sequence PTENIEKLTD…NSASLNFVDD (123 aa). Zn(2+) is bound by residues C46, C49, C95, and C98. C118 acts as the Nucleophile in catalysis.

The protein belongs to the MsrB Met sulfoxide reductase family. It depends on Zn(2+) as a cofactor.

It carries out the reaction L-methionyl-[protein] + [thioredoxin]-disulfide + H2O = L-methionyl-(R)-S-oxide-[protein] + [thioredoxin]-dithiol. The polypeptide is Peptide methionine sulfoxide reductase MsrB (Yersinia enterocolitica serotype O:8 / biotype 1B (strain NCTC 13174 / 8081)).